The following is a 418-amino-acid chain: 4-hydroxy-3-methylbut-2-en-1-yl diphosphate synthase (flavodoxin) (418 aa).

Residues C305, C308, C351, and E358 each contribute to the [4Fe-4S] cluster site.

This sequence belongs to the IspG family. [4Fe-4S] cluster serves as cofactor.

It carries out the reaction (2E)-4-hydroxy-3-methylbut-2-enyl diphosphate + oxidized [flavodoxin] + H2O + 2 H(+) = 2-C-methyl-D-erythritol 2,4-cyclic diphosphate + reduced [flavodoxin]. Its pathway is isoprenoid biosynthesis; isopentenyl diphosphate biosynthesis via DXP pathway; isopentenyl diphosphate from 1-deoxy-D-xylulose 5-phosphate: step 5/6. Functionally, converts 2C-methyl-D-erythritol 2,4-cyclodiphosphate (ME-2,4cPP) into 1-hydroxy-2-methyl-2-(E)-butenyl 4-diphosphate. This chain is 4-hydroxy-3-methylbut-2-en-1-yl diphosphate synthase (flavodoxin), found in Bartonella bacilliformis (strain ATCC 35685 / KC583 / Herrer 020/F12,63).